Reading from the N-terminus, the 103-residue chain is Large ribosomal subunit protein uL24 (103 aa).

The protein belongs to the universal ribosomal protein uL24 family. As to quaternary structure, part of the 50S ribosomal subunit.

In terms of biological role, one of two assembly initiator proteins, it binds directly to the 5'-end of the 23S rRNA, where it nucleates assembly of the 50S subunit. Its function is as follows. One of the proteins that surrounds the polypeptide exit tunnel on the outside of the subunit. The chain is Large ribosomal subunit protein uL24 from Rhizobium meliloti (strain 1021) (Ensifer meliloti).